Consider the following 426-residue polypeptide: UPF0597 protein CLD_2825 (426 aa).

It belongs to the UPF0597 family.

The polypeptide is UPF0597 protein CLD_2825 (Clostridium botulinum (strain Okra / Type B1)).